Here is a 130-residue protein sequence, read N- to C-terminus: Glycine cleavage system H protein (130 aa).

In terms of domain architecture, Lipoyl-binding spans 25 to 106 (TALIGISDFA…PFDSWMIKVK (82 aa)). The residue at position 66 (lysine 66) is an N6-lipoyllysine.

The protein belongs to the GcvH family. In terms of assembly, the glycine cleavage system is composed of four proteins: P, T, L and H. Requires (R)-lipoate as cofactor.

Its function is as follows. The glycine cleavage system catalyzes the degradation of glycine. The H protein shuttles the methylamine group of glycine from the P protein to the T protein. The sequence is that of Glycine cleavage system H protein from Leptospira borgpetersenii serovar Hardjo-bovis (strain JB197).